A 293-amino-acid polypeptide reads, in one-letter code: tRNA pseudouridine synthase B (293 aa).

Asp38 serves as the catalytic Nucleophile.

The protein belongs to the pseudouridine synthase TruB family. Type 1 subfamily.

The catalysed reaction is uridine(55) in tRNA = pseudouridine(55) in tRNA. In terms of biological role, responsible for synthesis of pseudouridine from uracil-55 in the psi GC loop of transfer RNAs. The chain is tRNA pseudouridine synthase B from Trichormus variabilis (strain ATCC 29413 / PCC 7937) (Anabaena variabilis).